Here is a 673-residue protein sequence, read N- to C-terminus: Probable serine/threonine-protein kinase SCO3848 (673 aa).

In terms of domain architecture, Protein kinase spans 11-277 (YELGPVLGRG…EMRVDIEACL (267 aa)). Residues 17-25 (LGRGGMAEV) and Lys-40 contribute to the ATP site. The Proton acceptor role is filled by Asp-138. Residues 302–345 (DQPTTALRSDGGGGATTMLPPMNPDDGGYGYDERPDRRRQQPRK) are disordered. PASTA domains are found at residues 379 to 445 (GNDK…VVST), 446 to 511 (GAPK…EVAK), 512 to 580 (AEEK…VVGK), and 581 to 649 (AVEK…MTVP). The interval 472–500 (FEVETKQTESSQDEGTILSQNPDPGKELE) is disordered. Residues 479–493 (TESSQDEGTILSQNP) show a composition bias toward polar residues. Disordered stretches follow at residues 613-641 (AQGS…PAAT) and 653-673 (GNGN…GFGD).

This sequence belongs to the protein kinase superfamily. Ser/Thr protein kinase family.

The catalysed reaction is L-seryl-[protein] + ATP = O-phospho-L-seryl-[protein] + ADP + H(+). The enzyme catalyses L-threonyl-[protein] + ATP = O-phospho-L-threonyl-[protein] + ADP + H(+). The protein is Probable serine/threonine-protein kinase SCO3848 of Streptomyces coelicolor (strain ATCC BAA-471 / A3(2) / M145).